Reading from the N-terminus, the 219-residue chain is ATP-dependent Clp protease proteolytic subunit 1, mitochondrial (219 aa).

Residues 1-23 (MLRRILTTSSVRNLTSSTQARVG) constitute a mitochondrion transit peptide. Residue S118 is the Nucleophile of the active site. Residue H143 is part of the active site.

The protein belongs to the peptidase S14 family. Tetradecamer that assembles into a two heptameric rings with a central cavity.

The protein resides in the mitochondrion matrix. The catalysed reaction is Hydrolysis of proteins to small peptides in the presence of ATP and magnesium. alpha-casein is the usual test substrate. In the absence of ATP, only oligopeptides shorter than five residues are hydrolyzed (such as succinyl-Leu-Tyr-|-NHMec, and Leu-Tyr-Leu-|-Tyr-Trp, in which cleavage of the -Tyr-|-Leu- and -Tyr-|-Trp bonds also occurs).. In terms of biological role, clp cleaves peptides in various proteins in a process that requires ATP hydrolysis. Clp may be responsible for a fairly general and central housekeeping function rather than for the degradation of specific substrates. The protein is ATP-dependent Clp protease proteolytic subunit 1, mitochondrial of Caenorhabditis briggsae.